The sequence spans 154 residues: Ribonuclease HI (154 aa).

The RNase H type-1 domain occupies 1–142 (MQKQIEIFTD…CDQLAKAGAE (142 aa)). The Mg(2+) site is built by Asp-10, Glu-48, Asp-70, and Asp-134.

Belongs to the RNase H family. In terms of assembly, monomer. Requires Mg(2+) as cofactor.

Its subcellular location is the cytoplasm. The catalysed reaction is Endonucleolytic cleavage to 5'-phosphomonoester.. Functionally, endonuclease that specifically degrades the RNA of RNA-DNA hybrids. The sequence is that of Ribonuclease HI (rnhA) from Pasteurella multocida (strain Pm70).